A 377-amino-acid chain; its full sequence is Queuine tRNA-ribosyltransferase (377 aa).

D89 serves as the catalytic Proton acceptor. Substrate-binding positions include 89-93 (DSGGF), D143, Q187, and G214. Residues 245–251 (GVGKPED) are RNA binding. The active-site Nucleophile is D264. Residues 269–273 (TRNAR) form an RNA binding; important for wobble base 34 recognition region. Residues C302, C304, C307, and H333 each coordinate Zn(2+).

The protein belongs to the queuine tRNA-ribosyltransferase family. Homodimer. Within each dimer, one monomer is responsible for RNA recognition and catalysis, while the other monomer binds to the replacement base PreQ1. The cofactor is Zn(2+).

It catalyses the reaction 7-aminomethyl-7-carbaguanine + guanosine(34) in tRNA = 7-aminomethyl-7-carbaguanosine(34) in tRNA + guanine. It participates in tRNA modification; tRNA-queuosine biosynthesis. Catalyzes the base-exchange of a guanine (G) residue with the queuine precursor 7-aminomethyl-7-deazaguanine (PreQ1) at position 34 (anticodon wobble position) in tRNAs with GU(N) anticodons (tRNA-Asp, -Asn, -His and -Tyr). Catalysis occurs through a double-displacement mechanism. The nucleophile active site attacks the C1' of nucleotide 34 to detach the guanine base from the RNA, forming a covalent enzyme-RNA intermediate. The proton acceptor active site deprotonates the incoming PreQ1, allowing a nucleophilic attack on the C1' of the ribose to form the product. After dissociation, two additional enzymatic reactions on the tRNA convert PreQ1 to queuine (Q), resulting in the hypermodified nucleoside queuosine (7-(((4,5-cis-dihydroxy-2-cyclopenten-1-yl)amino)methyl)-7-deazaguanosine). This Shewanella piezotolerans (strain WP3 / JCM 13877) protein is Queuine tRNA-ribosyltransferase.